The sequence spans 229 residues: Cytidylate kinase (229 aa).

Position 10–18 (10–18 (GHSSSGKST)) interacts with ATP.

It belongs to the cytidylate kinase family. Type 1 subfamily.

It localises to the cytoplasm. It carries out the reaction CMP + ATP = CDP + ADP. The enzyme catalyses dCMP + ATP = dCDP + ADP. This is Cytidylate kinase from Parabacteroides distasonis (strain ATCC 8503 / DSM 20701 / CIP 104284 / JCM 5825 / NCTC 11152).